A 158-amino-acid chain; its full sequence is UPF0262 protein RSKD131_1985 (158 aa).

The protein belongs to the UPF0262 family.

The sequence is that of UPF0262 protein RSKD131_1985 from Cereibacter sphaeroides (strain KD131 / KCTC 12085) (Rhodobacter sphaeroides).